Reading from the N-terminus, the 77-residue chain is Dermatoxin-DA1 (77 aa).

The N-terminal stretch at 1–22 (MAFLKKSLFLVLFLGLVPLFLC) is a signal peptide. Positions 23–42 (ENEKREGENEKEENDDQSEE) are excised as a propeptide. Residue K76 is modified to Lysine amide.

It belongs to the frog skin active peptide (FSAP) family. Dermatoxin subfamily. As to expression, expressed by the skin glands.

Its subcellular location is the secreted. Possesses a potent antimicrobial activity against Gram-positive and Gram-negative bacteria. Probably acts by disturbing membrane functions with its amphipathic structure. In Agalychnis dacnicolor (Giant Mexican leaf frog), this protein is Dermatoxin-DA1.